Consider the following 392-residue polypeptide: O-phospho-L-seryl-tRNA:Cys-tRNA synthase 1 (392 aa).

Residues 85 to 86, Asn190, and 213 to 215 each bind pyridoxal 5'-phosphate; these read AR and SGH. Residue Lys216 is modified to N6-(pyridoxal phosphate)lysine.

This sequence belongs to the SepCysS family. Homodimer. Interacts with SepRS. Pyridoxal 5'-phosphate is required as a cofactor.

It carries out the reaction O-phospho-L-seryl-tRNA(Cys) + hydrogen sulfide + H(+) = L-cysteinyl-tRNA(Cys) + phosphate. Converts O-phospho-L-seryl-tRNA(Cys) (Sep-tRNA(Cys)) to L-cysteinyl-tRNA(Cys) (Cys-tRNA(Cys)). The protein is O-phospho-L-seryl-tRNA:Cys-tRNA synthase 1 of Methanocorpusculum labreanum (strain ATCC 43576 / DSM 4855 / Z).